The following is a 115-amino-acid chain: Parathyroid hormone (115 aa).

Residues 1–25 (MMSAKDMVKVMIVMLAICFLARSDG) form the signal peptide. Residues 26 to 31 (KSVKKR) constitute a propeptide that is removed on maturation. The segment at 51 to 69 (RVEWLRKKLQDVHNFVALG) is important for receptor binding. The tract at residues 77–99 (GSSQRPRKKEDNVLVESHQKSLG) is disordered. Basic and acidic residues predominate over residues 84–99 (KKEDNVLVESHQKSLG).

Belongs to the parathyroid hormone family. As to quaternary structure, interacts with PTH1R (via N-terminal extracellular domain).

It localises to the secreted. In terms of biological role, parathyroid hormone elevates calcium level by dissolving the salts in bone and preventing their renal excretion. Acts by binding to its receptor, PTH1R, activating G protein-coupled receptor signaling. Stimulates [1-14C]-2-deoxy-D-glucose (2DG) transport and glycogen synthesis in osteoblastic cells. This Bos taurus (Bovine) protein is Parathyroid hormone.